Consider the following 46-residue polypeptide: Iota-conotoxin-like Fi11.8 (46 aa).

Proline 2 and proline 11 each carry 4-hydroxyproline. Disulfide bonds link cysteine 5–cysteine 19, cysteine 12–cysteine 22, cysteine 18–cysteine 27, and cysteine 21–cysteine 38. Proline 29 is subject to 4-hydroxyproline. Position 33 is a 6'-bromotryptophan (tryptophan 33). A D-phenylalanine modification is found at phenylalanine 44.

It belongs to the conotoxin I1 superfamily. In terms of tissue distribution, expressed by the venom duct.

It is found in the secreted. Functionally, iota-conotoxins bind to voltage-gated sodium channels (Nav) and act as agonists by shifting the voltage-dependence of activation to more hyperpolarized levels. Produces general excitatory symptoms. The polypeptide is Iota-conotoxin-like Fi11.8 (Conus figulinus (Fig cone)).